Consider the following 352-residue polypeptide: Protein MGF 360-9L (352 aa).

The protein belongs to the asfivirus MGF 360 family. As to quaternary structure, interacts with host STAT1; this interaction mediates STAT1 degradation through apoptosis. Interacts with host STAT2; this interaction mediates STAT2 degradation through the proteasome.

The protein localises to the host cytoplasm. Plays a role in virus cell tropism, and may be required for efficient virus replication in macrophages. In addition, inhibits IFN-beta-induced IFN-stimulated genes (ISGs) transcription. Mechanistically, degrades host STAT1 and STAT2 through apoptosis and ubiquitin-proteasome pathways respectively. The protein is Protein MGF 360-9L of Ornithodoros (relapsing fever ticks).